The chain runs to 176 residues: Nucleoside triphosphate/diphosphate phosphatase (176 aa).

The active-site Proton donor is arginine 23. 6 residues coordinate Mg(2+): asparagine 87, aspartate 103, aspartate 105, aspartate 107, aspartate 120, and glutamate 123.

The protein belongs to the Ntdp family. It depends on Mg(2+) as a cofactor.

It carries out the reaction a ribonucleoside 5'-triphosphate + H2O = a ribonucleoside 5'-diphosphate + phosphate + H(+). The catalysed reaction is a ribonucleoside 5'-diphosphate + H2O = a ribonucleoside 5'-phosphate + phosphate + H(+). Has nucleoside phosphatase activity towards nucleoside triphosphates and nucleoside diphosphates. The sequence is that of Nucleoside triphosphate/diphosphate phosphatase from Bacillus anthracis (strain A0248).